Consider the following 163-residue polypeptide: Crossover junction endodeoxyribonuclease RuvC (163 aa).

Active-site residues include aspartate 9, glutamate 76, and aspartate 148. Mg(2+) is bound by residues aspartate 9, glutamate 76, and aspartate 148.

The protein belongs to the RuvC family. As to quaternary structure, homodimer which binds Holliday junction (HJ) DNA. The HJ becomes 2-fold symmetrical on binding to RuvC with unstacked arms; it has a different conformation from HJ DNA in complex with RuvA. In the full resolvosome a probable DNA-RuvA(4)-RuvB(12)-RuvC(2) complex forms which resolves the HJ. The cofactor is Mg(2+).

The protein resides in the cytoplasm. The catalysed reaction is Endonucleolytic cleavage at a junction such as a reciprocal single-stranded crossover between two homologous DNA duplexes (Holliday junction).. Functionally, the RuvA-RuvB-RuvC complex processes Holliday junction (HJ) DNA during genetic recombination and DNA repair. Endonuclease that resolves HJ intermediates. Cleaves cruciform DNA by making single-stranded nicks across the HJ at symmetrical positions within the homologous arms, yielding a 5'-phosphate and a 3'-hydroxyl group; requires a central core of homology in the junction. The consensus cleavage sequence is 5'-(A/T)TT(C/G)-3'. Cleavage occurs on the 3'-side of the TT dinucleotide at the point of strand exchange. HJ branch migration catalyzed by RuvA-RuvB allows RuvC to scan DNA until it finds its consensus sequence, where it cleaves and resolves the cruciform DNA. The sequence is that of Crossover junction endodeoxyribonuclease RuvC from Trichodesmium erythraeum (strain IMS101).